The sequence spans 236 residues: 2-C-methyl-D-erythritol 4-phosphate cytidylyltransferase (236 aa).

It belongs to the IspD/TarI cytidylyltransferase family. IspD subfamily. As to quaternary structure, homodimer.

The enzyme catalyses 2-C-methyl-D-erythritol 4-phosphate + CTP + H(+) = 4-CDP-2-C-methyl-D-erythritol + diphosphate. It participates in isoprenoid biosynthesis; isopentenyl diphosphate biosynthesis via DXP pathway; isopentenyl diphosphate from 1-deoxy-D-xylulose 5-phosphate: step 2/6. Catalyzes the formation of 4-diphosphocytidyl-2-C-methyl-D-erythritol from CTP and 2-C-methyl-D-erythritol 4-phosphate (MEP). The polypeptide is 2-C-methyl-D-erythritol 4-phosphate cytidylyltransferase (Salmonella paratyphi A (strain ATCC 9150 / SARB42)).